Consider the following 427-residue polypeptide: Putative B3 domain-containing protein Os04g0346900 (427 aa).

DNA-binding regions (TF-B3) lie at residues Leu25–Thr118 and Lys140–Asn236. A disordered region spans residues Thr253–Thr309. Positions Ser263 to Ser273 are enriched in basic residues. The segment at residues Trp320–Cys427 is a DNA-binding region (TF-B3 3).

Its subcellular location is the nucleus. This chain is Putative B3 domain-containing protein Os04g0346900, found in Oryza sativa subsp. japonica (Rice).